The sequence spans 260 residues: NH(3)-dependent NAD(+) synthetase (260 aa).

31 to 38 (GLSGGLDS) serves as a coordination point for ATP. Asp37 provides a ligand contact to Mg(2+). Arg112 serves as a coordination point for deamido-NAD(+). Thr132 contributes to the ATP binding site. Position 137 (Glu137) interacts with Mg(2+). 2 residues coordinate ATP: Lys161 and Ser183.

Belongs to the NAD synthetase family. Homodimer.

The enzyme catalyses deamido-NAD(+) + NH4(+) + ATP = AMP + diphosphate + NAD(+) + H(+). Its pathway is cofactor biosynthesis; NAD(+) biosynthesis; NAD(+) from deamido-NAD(+) (ammonia route): step 1/1. Its function is as follows. Catalyzes the ATP-dependent amidation of deamido-NAD to form NAD. Uses ammonia as a nitrogen source. The polypeptide is NH(3)-dependent NAD(+) synthetase (Helicobacter pylori (strain HPAG1)).